The sequence spans 97 residues: uncharacterized protein (97 aa).

A disordered region spans residues 27–50 (IGESEDKTNSRGQPATMKEDEVED).

This is an uncharacterized protein from Caldicellulosiruptor saccharolyticus (Caldocellum saccharolyticum).